A 354-amino-acid polypeptide reads, in one-letter code: Methionine import ATP-binding protein MetN (354 aa).

One can recognise an ABC transporter domain in the interval 8–250 (LDHIDITFRQ…PKEALTQEFI (243 aa)). An ATP-binding site is contributed by 42 to 49 (GYSGAGKS).

The protein belongs to the ABC transporter superfamily. Methionine importer (TC 3.A.1.24) family. The complex is composed of two ATP-binding proteins (MetN), two transmembrane proteins (MetI) and a solute-binding protein (MetQ).

The protein resides in the cell membrane. It catalyses the reaction L-methionine(out) + ATP + H2O = L-methionine(in) + ADP + phosphate + H(+). It carries out the reaction D-methionine(out) + ATP + H2O = D-methionine(in) + ADP + phosphate + H(+). In terms of biological role, part of the ABC transporter complex MetNIQ involved in methionine import. Responsible for energy coupling to the transport system. The sequence is that of Methionine import ATP-binding protein MetN from Streptococcus pyogenes serotype M12 (strain MGAS2096).